The following is a 44-amino-acid chain: MRNIKTYLSTVPVLTTLWFGSLAGLLIEINRLFPDALLFPFFSF.

A helical transmembrane segment spans residues Tyr7 to Ile27.

Belongs to the PsaJ family.

It localises to the plastid. The protein resides in the chloroplast thylakoid membrane. Functionally, may help in the organization of the PsaE and PsaF subunits. The sequence is that of Photosystem I reaction center subunit IX from Dioscorea elephantipes (Elephant's foot yam).